The primary structure comprises 251 residues: 5'-nucleotidase SurE (251 aa).

Positions 8, 9, 39, and 91 each coordinate a divalent metal cation.

The protein belongs to the SurE nucleotidase family. A divalent metal cation serves as cofactor.

The protein resides in the cytoplasm. It catalyses the reaction a ribonucleoside 5'-phosphate + H2O = a ribonucleoside + phosphate. Nucleotidase that shows phosphatase activity on nucleoside 5'-monophosphates. The sequence is that of 5'-nucleotidase SurE from Halorhodospira halophila (strain DSM 244 / SL1) (Ectothiorhodospira halophila (strain DSM 244 / SL1)).